The chain runs to 297 residues: Lipoyl synthase (297 aa).

7 residues coordinate [4Fe-4S] cluster: Cys-37, Cys-42, Cys-48, Cys-63, Cys-67, Cys-70, and Ser-276. One can recognise a Radical SAM core domain in the interval 49–265 (WSRKHATVMI…ERIAKTKGFL (217 aa)).

The protein belongs to the radical SAM superfamily. Lipoyl synthase family. [4Fe-4S] cluster serves as cofactor.

It is found in the cytoplasm. It catalyses the reaction [[Fe-S] cluster scaffold protein carrying a second [4Fe-4S](2+) cluster] + N(6)-octanoyl-L-lysyl-[protein] + 2 oxidized [2Fe-2S]-[ferredoxin] + 2 S-adenosyl-L-methionine + 4 H(+) = [[Fe-S] cluster scaffold protein] + N(6)-[(R)-dihydrolipoyl]-L-lysyl-[protein] + 4 Fe(3+) + 2 hydrogen sulfide + 2 5'-deoxyadenosine + 2 L-methionine + 2 reduced [2Fe-2S]-[ferredoxin]. It functions in the pathway protein modification; protein lipoylation via endogenous pathway; protein N(6)-(lipoyl)lysine from octanoyl-[acyl-carrier-protein]: step 2/2. Functionally, catalyzes the radical-mediated insertion of two sulfur atoms into the C-6 and C-8 positions of the octanoyl moiety bound to the lipoyl domains of lipoate-dependent enzymes, thereby converting the octanoylated domains into lipoylated derivatives. The chain is Lipoyl synthase from Rickettsia prowazekii (strain Madrid E).